The sequence spans 249 residues: 2,3-bisphosphoglycerate-dependent phosphoglycerate mutase (249 aa).

Substrate contacts are provided by residues 11–18 (RHGESEWN), 24–25 (TG), Arg63, 90–93 (ERHY), Lys101, and 117–118 (RR). His12 acts as the Tele-phosphohistidine intermediate in catalysis. Glu90 acts as the Proton donor/acceptor in catalysis. Positions 119–138 (SYDTPPPPIERGSTYSQDAD) are disordered. Residue 184-185 (GN) coordinates substrate.

It belongs to the phosphoglycerate mutase family. BPG-dependent PGAM subfamily.

The catalysed reaction is (2R)-2-phosphoglycerate = (2R)-3-phosphoglycerate. It participates in carbohydrate degradation; glycolysis; pyruvate from D-glyceraldehyde 3-phosphate: step 3/5. In terms of biological role, catalyzes the interconversion of 2-phosphoglycerate and 3-phosphoglycerate. The polypeptide is 2,3-bisphosphoglycerate-dependent phosphoglycerate mutase (Mycolicibacterium paratuberculosis (strain ATCC BAA-968 / K-10) (Mycobacterium paratuberculosis)).